Consider the following 574-residue polypeptide: Transmembrane protein 108 (574 aa).

Residues 9-29 traverse the membrane as a helical segment; the sequence is YCQLLSFLLTLALTKALVLAV. The segment at 31-169 is interaction with SH3GL2; that stretch reads EPSPRESLQT…ATTRRPPRPP (139 aa). Disordered stretches follow at residues 32-352 and 364-417; these read PSPR…SGVF and DATV…PRPL. Positions 58 to 86 are enriched in polar residues; that stretch reads TRLSSVLTLNPTPDGPSSQAAATLETTVS. A compositionally biased stretch (low complexity) spans 132 to 160; sequence LPPGDATPTTTLPTKPAGTTSRPTVAPRA. The interval 173-406 is interaction with DST (isoform 1); the sequence is RKGAGGSTRT…SPAEEEAEAS (234 aa). Residues 245 to 271 are compositionally biased toward polar residues; sequence FSSTQPQTVSPATAPRSTSRVPPTTSL. Residues 292–312 show a composition bias toward low complexity; the sequence is TSPGGEPAATAATGAPASTQP. The span at 316 to 332 shows a compositional bias: polar residues; the sequence is PSQSPHGDVQDSASHSD. A helical membrane pass occupies residues 468-488; that stretch reads IAWVIVAISVPISSCSVLLTV. Residues 489–574 are interaction with CYFIP2; the sequence is CCMRRKKKTA…FVGNDQVSEI (86 aa).

In terms of assembly, interacts with DST (isoform 1). Interacts with SH3GL2. Interacts (via N-terminus) with CYFIP1 and CYFIP2; the interactions associate TMEM108 with the WAVE1 complex. Post-translationally, glycosylated. In terms of tissue distribution, expressed in the nervous system tissues, such as hippocampus and spinal cord, is barely detectable in peripheral tissues such as heart, lung, liver, kidney and muscle. In brain, highly expressed in dentate gyrus neurons and expressed in cortex, olfactory bulb, ammon's horn, cerebellum, hypothalamus and striatum.

The protein resides in the membrane. The protein localises to the postsynaptic density. Its subcellular location is the endosome membrane. It localises to the cell projection. It is found in the axon. The protein resides in the dendrite. The protein localises to the early endosome. Functionally, transmembrane protein required for proper cognitive functions. Involved in the development of dentate gyrus (DG) neuron circuitry, is necessary for AMPA receptors surface expression and proper excitatory postsynaptic currents of DG granule neurons. Regulates the organization and stability of the microtubule network of sensory neurons to allow axonal transport. Through the interaction with DST, mediates the docking of the dynein/dynactin motor complex to vesicle cargos for retrograde axonal transport. In hippocampal neurons, required for BDNF-dependent dendrite outgrowth. Cooperates with SH3GL2 and recruits the WAVE1 complex to facilitate actin-dependent BDNF:NTRK2 early endocytic trafficking and mediate signaling from early endosomes. The chain is Transmembrane protein 108 from Mus musculus (Mouse).